The following is a 59-amino-acid chain: Cuticle protein 7 isoform a (59 aa).

At glutamine 1 the chain carries Pyrrolidone carboxylic acid.

This Limulus polyphemus (Atlantic horseshoe crab) protein is Cuticle protein 7 isoform a.